The chain runs to 929 residues: Alanine--tRNA ligase (929 aa).

Residues H619, H623, C722, and H726 each coordinate Zn(2+).

Belongs to the class-II aminoacyl-tRNA synthetase family. Zn(2+) serves as cofactor.

Its subcellular location is the cytoplasm. It carries out the reaction tRNA(Ala) + L-alanine + ATP = L-alanyl-tRNA(Ala) + AMP + diphosphate. Its function is as follows. Catalyzes the attachment of alanine to tRNA(Ala) in a two-step reaction: alanine is first activated by ATP to form Ala-AMP and then transferred to the acceptor end of tRNA(Ala). Also edits incorrectly charged Ser-tRNA(Ala) and Gly-tRNA(Ala) via its editing domain. In Halobacterium salinarum (strain ATCC 29341 / DSM 671 / R1), this protein is Alanine--tRNA ligase.